Here is a 219-residue protein sequence, read N- to C-terminus: Multiple organellar RNA editing factor 2, chloroplastic (219 aa).

A chloroplast-targeting transit peptide spans 1–48 (MALPLSGTRHLTRALLSNVTLMAPPRIPSSVHYGGSRLGCSTRFFSIR). The disordered stretch occupies residues 182–219 (VQRSPERQRRVEPQPQRAQDRPRYNDRTRYSRRRENTR). Over residues 185–219 (SPERQRRVEPQPQRAQDRPRYNDRTRYSRRRENTR) the composition is skewed to basic and acidic residues.

It belongs to the MORF family. As to quaternary structure, homodimer and heterodimer with MORF9. Interacts with protoporphyrinogen oxidase 1 PPOX1. Heterodimers with MORF8/RIP1 and MORF9/RIP9. Interacts with PCMP-A2/PMD1. Interacts with ORRM1. Interacts with ORRM6.

It localises to the plastid. Its subcellular location is the chloroplast. Functionally, involved in plastid rRNA processing and consequently in translation and early chloroplast differentiation. Involved in organellar RNA editing. Required for the processing of multiple editing sites in plastids. The chain is Multiple organellar RNA editing factor 2, chloroplastic from Arabidopsis thaliana (Mouse-ear cress).